The following is a 429-amino-acid chain: D-inositol 3-phosphate glycosyltransferase (429 aa).

His20 is a 1D-myo-inositol 3-phosphate binding site. Residues 26 to 27 and Gly34 each bind UDP-N-acetyl-alpha-D-glucosamine; that span reads QP. Residues 31–36, Lys89, Tyr122, Thr146, and Arg166 contribute to the 1D-myo-inositol 3-phosphate site; that span reads DAGGMN. UDP-N-acetyl-alpha-D-glucosamine contacts are provided by Arg240, Lys245, and Gln306. 3 residues coordinate Mg(2+): Tyr315, Arg316, and Ala318. UDP-N-acetyl-alpha-D-glucosamine is bound by residues Glu328 and Glu336. Thr342 is a Mg(2+) binding site.

It belongs to the glycosyltransferase group 1 family. MshA subfamily. Homodimer.

The enzyme catalyses 1D-myo-inositol 3-phosphate + UDP-N-acetyl-alpha-D-glucosamine = 1D-myo-inositol 2-acetamido-2-deoxy-alpha-D-glucopyranoside 3-phosphate + UDP + H(+). Its function is as follows. Catalyzes the transfer of a N-acetyl-glucosamine moiety to 1D-myo-inositol 3-phosphate to produce 1D-myo-inositol 2-acetamido-2-deoxy-glucopyranoside 3-phosphate in the mycothiol biosynthesis pathway. The polypeptide is D-inositol 3-phosphate glycosyltransferase (Nocardiopsis dassonvillei (strain ATCC 23218 / DSM 43111 / CIP 107115 / JCM 7437 / KCTC 9190 / NBRC 14626 / NCTC 10488 / NRRL B-5397 / IMRU 509) (Actinomadura dassonvillei)).